The primary structure comprises 184 residues: uncharacterized protein (184 aa).

The Nudix hydrolase domain occupies 36–164 (LRHRATYIVV…TPDSLKALAL (129 aa)). A Nudix box motif is present at residues 73-95 (GGVVQADEQLLESARREAEEELG). 2 residues coordinate Mg(2+): Glu89 and Glu93.

The protein belongs to the Nudix hydrolase family. Requires Mg(2+) as cofactor.

This is an uncharacterized protein from Salmonella typhi.